A 258-amino-acid polypeptide reads, in one-letter code: MVLIRVLANLLILQLSYAQKSSELVIGGDECNINEHRFLALVFNSSGFLCSGTLINQEWVLTAAHCDMENMRIYLGVHNESVQYDDEQTRVPEEKFFCLRSNNDTKWDKDIMLIRLDSPVNNSAHIAPLNLPFNPPMLGSVCRIMGWGAITSPNEIYPDVPHCANINLLHYSMCQAVYPGMPAQSRILCAGIQTGGIDTCSGDSGGPLICNGQFQGILHAGGNPCALPRAPGLYTRVFDYTDWIENIIAGNTDASCPP.

Residues Met-1–Ala-18 form the signal peptide. Positions Gln-19–Leu-24 are excised as a propeptide. The Peptidase S1 domain maps to Val-25 to Ala-249. 6 disulfides stabilise this stretch: Cys-31-Cys-163, Cys-50-Cys-66, Cys-98-Cys-256, Cys-142-Cys-210, Cys-174-Cys-189, and Cys-200-Cys-225. Asn-44 carries an N-linked (GlcNAc...) asparagine glycan. Residue His-65 is the Charge relay system of the active site. Residues Asn-79 and Asn-103 are each glycosylated (N-linked (GlcNAc...) asparagine). Catalysis depends on Asp-110, which acts as the Charge relay system. A glycan (N-linked (GlcNAc...) asparagine) is linked at Asn-121. Ser-204 functions as the Charge relay system in the catalytic mechanism.

Belongs to the peptidase S1 family. Snake venom subfamily. Monomer. Expressed by the venom gland.

It localises to the secreted. Its function is as follows. Snake venom serine protease that may act in the hemostasis system of the prey. In Gloydius halys (Chinese water mocassin), this protein is Snake venom serine protease PTLE1.